The following is a 131-amino-acid chain: Small ribosomal subunit protein uS8 (131 aa).

Belongs to the universal ribosomal protein uS8 family. As to quaternary structure, part of the 30S ribosomal subunit. Contacts proteins S5 and S12.

In terms of biological role, one of the primary rRNA binding proteins, it binds directly to 16S rRNA central domain where it helps coordinate assembly of the platform of the 30S subunit. The sequence is that of Small ribosomal subunit protein uS8 from Dehalococcoides mccartyi (strain CBDB1).